The chain runs to 288 residues: Energy-coupling factor transporter ATP-binding protein EcfA2 (288 aa).

Residues I3–L245 enclose the ABC transporter domain. G40–S47 is an ATP binding site.

This sequence belongs to the ABC transporter superfamily. Energy-coupling factor EcfA family. As to quaternary structure, forms a stable energy-coupling factor (ECF) transporter complex composed of 2 membrane-embedded substrate-binding proteins (S component), 2 ATP-binding proteins (A component) and 2 transmembrane proteins (T component).

The protein resides in the cell membrane. In terms of biological role, ATP-binding (A) component of a common energy-coupling factor (ECF) ABC-transporter complex. Unlike classic ABC transporters this ECF transporter provides the energy necessary to transport a number of different substrates. In Clostridioides difficile (strain 630) (Peptoclostridium difficile), this protein is Energy-coupling factor transporter ATP-binding protein EcfA2.